A 322-amino-acid chain; its full sequence is Undecaprenyl-phosphate 4-deoxy-4-formamido-L-arabinose transferase (322 aa).

Residues 1–235 (MFEIHPVKKV…TCLTTTPLRM (235 aa)) lie on the Cytoplasmic side of the membrane. A helical membrane pass occupies residues 236–256 (LSLLGSIIAIGGFSIAVLLVI). The Periplasmic portion of the chain corresponds to 257–269 (LRLTFGPQWAAEG). Residues 270 to 290 (VFMLFAVLFTFIGAQFIGMGL) traverse the membrane as a helical segment. Residues 291 to 322 (LGEYIGRIYTDVRARPRYFVQQVIRPSSKENE) are Cytoplasmic-facing.

It belongs to the glycosyltransferase 2 family.

The protein localises to the cell inner membrane. The enzyme catalyses UDP-4-deoxy-4-formamido-beta-L-arabinose + di-trans,octa-cis-undecaprenyl phosphate = 4-deoxy-4-formamido-alpha-L-arabinopyranosyl di-trans,octa-cis-undecaprenyl phosphate + UDP. It participates in glycolipid biosynthesis; 4-amino-4-deoxy-alpha-L-arabinose undecaprenyl phosphate biosynthesis; 4-amino-4-deoxy-alpha-L-arabinose undecaprenyl phosphate from UDP-4-deoxy-4-formamido-beta-L-arabinose and undecaprenyl phosphate: step 1/2. It functions in the pathway bacterial outer membrane biogenesis; lipopolysaccharide biosynthesis. Functionally, catalyzes the transfer of 4-deoxy-4-formamido-L-arabinose from UDP to undecaprenyl phosphate. The modified arabinose is attached to lipid A and is required for resistance to polymyxin and cationic antimicrobial peptides. The chain is Undecaprenyl-phosphate 4-deoxy-4-formamido-L-arabinose transferase from Escherichia coli O45:K1 (strain S88 / ExPEC).